The following is a 158-amino-acid chain: Ribosomal RNA large subunit methyltransferase H (158 aa).

S-adenosyl-L-methionine-binding positions include Leu74, Gly105, and 124 to 129 (LGPLTL).

Belongs to the RNA methyltransferase RlmH family. In terms of assembly, homodimer.

Its subcellular location is the cytoplasm. The catalysed reaction is pseudouridine(1915) in 23S rRNA + S-adenosyl-L-methionine = N(3)-methylpseudouridine(1915) in 23S rRNA + S-adenosyl-L-homocysteine + H(+). Its function is as follows. Specifically methylates the pseudouridine at position 1915 (m3Psi1915) in 23S rRNA. The sequence is that of Ribosomal RNA large subunit methyltransferase H from Xylella fastidiosa (strain 9a5c).